The following is a 246-amino-acid chain: Protein YIPF4 (246 aa).

Residues 1-115 lie on the Cytoplasmic side of the membrane; the sequence is MQPPGPPPAY…FNRQVVRDNP (115 aa). The helical transmembrane segment at 116-136 threads the bilayer; the sequence is DFWGPLAVVLFFSMISLYGQF. Residues 137–140 lie on the Lumenal side of the membrane; that stretch reads RVVS. A helical membrane pass occupies residues 141–161; that stretch reads WIITIWIFGSLTIFLLARVLG. Topologically, residues 162–168 are cytoplasmic; that stretch reads GEVAYGQ. Residues 169–189 traverse the membrane as a helical segment; it reads VLGVIGYSLLPLIVIAPILLV. Topologically, residues 190–197 are lumenal; that stretch reads VGSFEMVS. The chain crosses the membrane as a helical span at residues 198 to 218; that stretch reads TLIKLFGVFWAAYSAASLLVG. Residues 219-225 are Cytoplasmic-facing; sequence EEFKTKK. A helical transmembrane segment spans residues 226–246; it reads PLLIYPIFLLYIYFLSLYTGV.

Belongs to the YIP1 family. As to quaternary structure, interacts with YIPF3 and YIPF5.

The protein resides in the golgi apparatus. It is found in the cis-Golgi network membrane. In terms of biological role, involved in the maintenance of the Golgi structure. The protein is Protein YIPF4 (Yipf4) of Mus musculus (Mouse).